We begin with the raw amino-acid sequence, 307 residues long: Fructokinase (307 aa).

It belongs to the carbohydrate kinase PfkB family.

It carries out the reaction D-fructose + ATP = D-fructose 6-phosphate + ADP + H(+). Its function is as follows. Involved in sucrose metabolism. The polypeptide is Fructokinase (scrK) (Klebsiella pneumoniae).